Reading from the N-terminus, the 284-residue chain is MLSKQIPLGIYEKALPAGECWLERLQLAKMLGFDFVEMSVDETDDRLSRLDWSREQRLALVNAIVETGVRVPSMCLSAHRRFPLGSEDDAVRAQGLEIMRKAIQFAQDVGIRVIQLAGYDVYYQEANNETRRRFRDGLKESVEMASRAQVTLAMEIMDYPLMNSISKALGYAHYLNNPWFQLYPDIGNLSAWDNDVQMELQAGIGHIVAVHVKDTKPGVFKNVPFGEGVVDFERCFETLKQSGYCGPYLIEMWSETAEDPAAEVAKARDWVKARMAKAGMVEAA.

Belongs to the L-ribulose-5-phosphate 3-epimerase family.

It carries out the reaction L-ribulose 5-phosphate = L-xylulose 5-phosphate. Its pathway is cofactor degradation; L-ascorbate degradation; D-xylulose 5-phosphate from L-ascorbate: step 3/4. Its function is as follows. Catalyzes the isomerization of L-xylulose-5-phosphate to L-ribulose-5-phosphate. Is involved in the anaerobic L-ascorbate utilization. In Escherichia coli O8 (strain IAI1), this protein is L-ribulose-5-phosphate 3-epimerase UlaE.